A 515-amino-acid chain; its full sequence is Membrane-bound lytic murein transglycosylase F (515 aa).

Residues 1-32 (MKKLKINYLFIGILTLLLAAALWPSIPWFGKA) form the signal peptide. Residues 33–269 (DNRIAAIQSR…RMEEKYLGHG (237 aa)) are non-LT domain. The interval 270–515 (DDFDYVDTRT…PFSLKKKDEN (246 aa)) is LT domain. E314 is a catalytic residue. Residues 493–515 (QPSSNYLSHSPSLPFSLKKKDEN) form a disordered region.

In the N-terminal section; belongs to the bacterial solute-binding protein 3 family. This sequence in the C-terminal section; belongs to the transglycosylase Slt family.

Its subcellular location is the cell outer membrane. The catalysed reaction is Exolytic cleavage of the (1-&gt;4)-beta-glycosidic linkage between N-acetylmuramic acid (MurNAc) and N-acetylglucosamine (GlcNAc) residues in peptidoglycan, from either the reducing or the non-reducing ends of the peptidoglycan chains, with concomitant formation of a 1,6-anhydrobond in the MurNAc residue.. Its function is as follows. Murein-degrading enzyme that degrades murein glycan strands and insoluble, high-molecular weight murein sacculi, with the concomitant formation of a 1,6-anhydromuramoyl product. Lytic transglycosylases (LTs) play an integral role in the metabolism of the peptidoglycan (PG) sacculus. Their lytic action creates space within the PG sacculus to allow for its expansion as well as for the insertion of various structures such as secretion systems and flagella. The chain is Membrane-bound lytic murein transglycosylase F from Citrobacter koseri (strain ATCC BAA-895 / CDC 4225-83 / SGSC4696).